Here is a 144-residue protein sequence, read N- to C-terminus: Large ribosomal subunit protein uL13 (144 aa).

Belongs to the universal ribosomal protein uL13 family. As to quaternary structure, part of the 50S ribosomal subunit.

In terms of biological role, this protein is one of the early assembly proteins of the 50S ribosomal subunit, although it is not seen to bind rRNA by itself. It is important during the early stages of 50S assembly. This chain is Large ribosomal subunit protein uL13, found in Heliobacterium modesticaldum (strain ATCC 51547 / Ice1).